We begin with the raw amino-acid sequence, 115 residues long: OV39 antigen (115 aa).

The chain is OV39 antigen (OV39) from Onchocerca volvulus.